A 490-amino-acid polypeptide reads, in one-letter code: GTPase Der (490 aa).

2 consecutive EngA-type G domains span residues 3–166 (PVIA…PRDE) and 196–369 (IKIA…KSAV). Residues 9-16 (GRPNVGKS), 56-60 (DTGGI), 118-121 (NKID), 202-209 (GRPNVGKS), 249-253 (DTAGV), and 314-317 (NKWD) contribute to the GTP site. A KH-like domain is found at 370 to 454 (TRWPTSRLTQ…PIRIEFKGGE (85 aa)). The tract at residues 452-490 (GGENPYEGNKNTLTDRQVNKKRRMMSHHKKADKKRRDKR) is disordered. The span at 470 to 490 (NKKRRMMSHHKKADKKRRDKR) shows a compositional bias: basic residues.

Belongs to the TRAFAC class TrmE-Era-EngA-EngB-Septin-like GTPase superfamily. EngA (Der) GTPase family. As to quaternary structure, associates with the 50S ribosomal subunit.

Its function is as follows. GTPase that plays an essential role in the late steps of ribosome biogenesis. The protein is GTPase Der of Pseudomonas syringae pv. syringae (strain B728a).